A 324-amino-acid polypeptide reads, in one-letter code: Aquaporin-4 (324 aa).

The Cytoplasmic segment spans residues 1–36 (MSDRPAARPWGKCGSLCRREEIMVAFKGVWTQAFWK). S-palmitoyl cysteine attachment occurs at residues C13 and C17. The helical transmembrane segment at 37 to 57 (AVTAEFLAMLIFVLLSLGSTI) threads the bilayer. Residues 58–69 (NWGGKENPLPVD) lie on the Extracellular side of the membrane. The helical transmembrane segment at 70-89 (MVLISLCFGLSIATMVQCFG) threads the bilayer. Topologically, residues 90 to 93 (HISG) are cytoplasmic. An intramembrane region (discontinuously helical) is located at residues 94–101 (GHINPAVT). The NPA 1 motif lies at 97 to 99 (NPA). The Cytoplasmic portion of the chain corresponds to 102-115 (VAMVCTRKISIAKS). Residue S111 is modified to Phosphoserine; by PKG. A helical transmembrane segment spans residues 116 to 136 (VFYIAAQCLGAIIGAGILYLV). At 137-155 (TPPSVVGGLGVTTVHGNLT) the chain is on the extracellular side. N153 carries N-linked (GlcNAc...) asparagine glycosylation. A helical transmembrane segment spans residues 156-176 (AGHGLLVELIITFQLVFTIFA). Residues 177 to 184 (SCDSKRTD) lie on the Cytoplasmic side of the membrane. S180 bears the Phosphoserine; by PKC mark. The chain crosses the membrane as a helical span at residues 185–205 (VTGSIALAIGFSVAIGHLFAI). N-linked (GlcNAc...) asparagine glycosylation occurs at N206. The Extracellular portion of the chain corresponds to 206 to 208 (NYT). Positions 209–222 (GASMNPARSFGPAV) form an intramembrane region, discontinuously helical. Residues 213-215 (NPA) carry the NPA 2 motif. At 223–231 (IMGNWENHW) the chain is on the extracellular side. The helical transmembrane segment at 232–252 (IYWVGPIIGAVLAGGLYEYVF) threads the bilayer. The Cytoplasmic portion of the chain corresponds to 253–324 (CPDVELKRRF…PSGEIAQTQH (72 aa)). Phosphoserine occurs at positions 276 and 285. T289 carries the post-translational modification Phosphothreonine. Over residues 305 to 316 (DRGDEKKGKDPS) the composition is skewed to basic and acidic residues. Residues 305 to 324 (DRGDEKKGKDPSGEIAQTQH) are disordered.

Belongs to the MIP/aquaporin (TC 1.A.8) family. In terms of assembly, homotetramer. The tetramers can form oligomeric arrays in membranes. The size of the oligomers differs between tissues and is smaller in skeletal muscle than in brain. Interaction between AQP4 oligomeric arrays in close-by cells can contribute to cell-cell adhesion. Part of a complex containing MLC1, TRPV4, HEPACAM and ATP1B1. In terms of processing, phosphorylation by PKC at Ser-180 reduces conductance by 50%. Phosphorylation by PKG at Ser-111 in response to glutamate increases conductance by 40%. Post-translationally, isoform 2: Palmitoylated on its N-terminal region. Isoform 1: Not palmitoylated. Not expressed in kidney, Detectable in gastric parietal and brain astroglial cells. The absence of AQP4 in kidney may be critical for the extreme urinary concentration that occurs in this species (up to 5,000 mosmol/kg H(2)O).

The protein resides in the cell membrane. It is found in the basolateral cell membrane. Its subcellular location is the endosome membrane. It localises to the sarcolemma. The protein localises to the cell projection. The enzyme catalyses H2O(in) = H2O(out). In terms of biological role, forms a water-specific channel. Plays an important role in brain water homeostasis and in glymphatic solute transport. Required for a normal rate of water exchange across the blood brain interface. Required for normal levels of cerebrospinal fluid influx into the brain cortex and parenchyma along paravascular spaces that surround penetrating arteries, and for normal drainage of interstitial fluid along paravenous drainage pathways. Thereby, it is required for normal clearance of solutes from the brain interstitial fluid, including soluble beta-amyloid peptides derived from APP. Plays a redundant role in urinary water homeostasis and urinary concentrating ability. The polypeptide is Aquaporin-4 (AQP4) (Dipodomys merriami (Merriam's kangaroo rat)).